The chain runs to 453 residues: Homogentisate 1,2-dioxygenase (453 aa).

The active-site Proton acceptor is the His306. The Fe cation site is built by His349 and Glu355. Homogentisate-binding residues include Tyr364 and His385. Position 385 (His385) interacts with Fe cation.

This sequence belongs to the homogentisate dioxygenase family. As to quaternary structure, hexamer; dimer of trimers. It depends on Fe cation as a cofactor.

The catalysed reaction is homogentisate + O2 = 4-maleylacetoacetate + H(+). It participates in amino-acid degradation; L-phenylalanine degradation; acetoacetate and fumarate from L-phenylalanine: step 4/6. Functionally, involved in the catabolism of homogentisate (2,5-dihydroxyphenylacetate or 2,5-OH-PhAc), a central intermediate in the degradation of phenylalanine and tyrosine. Catalyzes the oxidative ring cleavage of the aromatic ring of homogentisate to yield maleylacetoacetate. In Rhizobium johnstonii (strain DSM 114642 / LMG 32736 / 3841) (Rhizobium leguminosarum bv. viciae), this protein is Homogentisate 1,2-dioxygenase.